We begin with the raw amino-acid sequence, 438 residues long: Polycomb protein eed-A (438 aa).

The segment at 1–67 (MSEASGRAAG…NAPGRKAWGK (67 aa)) is disordered. A compositionally biased stretch (polar residues) spans 40 to 57 (SIESGTNTERPDTPTNAA). 7 WD repeats span residues 88–131 (DHNQ…DIRL), 139–182 (DADE…CIKH), 185–225 (GHGN…LVAI), 231–270 (GHRDEVLSADYDLLGEKIMSCGMDHSLKLWRINSLRMKTA), 301–338 (IHRNYVDCVRWLGDLILSKSCENAIVCWKPGKMEDDID), 356–396 (SQCD…PHKA), and 405–438 (KCASAVRQTSFSRDSSILVAVCDDATIWRWDRLR).

The protein belongs to the WD repeat ESC family. In terms of assembly, component of the prc2/eed-ezh2 complex. Interacts with yy1. Can interact with ezh2, hdac1 and taf9.

It is found in the nucleus. In terms of biological role, polycomb group (PcG) protein. Component of the prc2/eed-ezh2 complex, which methylates 'Lys-9' and 'Lys-27' of histone H3, leading to transcriptional repression of the affected target gene. The protein is Polycomb protein eed-A (eed-a) of Xenopus laevis (African clawed frog).